Consider the following 45-residue polypeptide: Osteocalcin (45 aa).

The region spanning 1 to 44 is the Gla domain; that stretch reads AGTAXGDLTPFQLESLREVCEVNLACEHMADTXGIVAAYTAYYG. Glutamate 14, glutamate 18, glutamate 21, and glutamate 27 together coordinate Ca(2+). 3 positions are modified to 4-carboxyglutamate: glutamate 14, glutamate 18, and glutamate 21. The cysteines at positions 20 and 26 are disulfide-linked.

Belongs to the osteocalcin/matrix Gla protein family. In terms of processing, gamma-carboxyglutamate residues are formed by vitamin K dependent carboxylation by GGCX. These residues are essential for the binding of calcium.

It localises to the secreted. Its function is as follows. The carboxylated form is one of the main organic components of the bone matrix, which constitutes 1-2% of the total bone protein. The carboxylated form binds strongly to apatite and calcium. This chain is Osteocalcin (bglap), found in Danio rerio (Zebrafish).